A 337-amino-acid chain; its full sequence is Regulator of RpoS (337 aa).

The Response regulatory domain occupies 9 to 123 (QILIVEDEQV…NRLREMVFAC (115 aa)). The residue at position 58 (D58) is a 4-aspartylphosphate.

The protein belongs to the RssB family. As to quaternary structure, binds to RpoS. Post-translationally, phosphorylated. Phosphorylation stimulates the interaction with RpoS and, therefore, the proteolysis of RpoS.

In terms of biological role, regulates the turnover of the sigma S factor (RpoS) by promoting its proteolysis in exponentially growing cells. Acts by binding and delivering RpoS to the ClpXP protease. RssB is not co-degraded with RpoS, but is released from the complex and can initiate a new cycle of RpoS recognition and degradation. This Shigella flexneri protein is Regulator of RpoS.